Here is a 506-residue protein sequence, read N- to C-terminus: Glutamyl-tRNA(Gln) amidotransferase subunit A, mitochondrial (506 aa).

Active-site charge relay system residues include K62 and S141. The active-site Acyl-ester intermediate is S165.

Belongs to the amidase family. GatA subfamily. As to quaternary structure, subunit of the heterotrimeric GatCAB amidotransferase (AdT) complex, composed of A, B and C subunits.

Its subcellular location is the mitochondrion. It carries out the reaction L-glutamyl-tRNA(Gln) + L-glutamine + ATP + H2O = L-glutaminyl-tRNA(Gln) + L-glutamate + ADP + phosphate + H(+). Its function is as follows. Allows the formation of correctly charged Gln-tRNA(Gln) through the transamidation of misacylated Glu-tRNA(Gln) in the mitochondria. The reaction takes place in the presence of glutamine and ATP through an activated gamma-phospho-Glu-tRNA(Gln). This is Glutamyl-tRNA(Gln) amidotransferase subunit A, mitochondrial from Emericella nidulans (strain FGSC A4 / ATCC 38163 / CBS 112.46 / NRRL 194 / M139) (Aspergillus nidulans).